We begin with the raw amino-acid sequence, 241 residues long: Endodeoxyribonuclease NucC (241 aa).

Catalysis depends on residues aspartate 73, glutamate 104, and lysine 106. Positions 73 and 104 each coordinate Mg(2+).

It belongs to the NucC endonuclease family. In terms of assembly, self-oligomerizes. Forms homotrimers; in the presence of cAAA the trimers associate face-to-face to form homohexamers. The 2 cAAA-binding sites are on the exterior of the hexamer at the three-way junction, there are maximally 2 cyclic nucleotides per hexamer. Mg(2+) serves as cofactor.

Its activity is regulated as follows. Activated by cAAA and to a lesser extent cAA and cAAG; cAAA and cAA are products of its cognate CD-NTase. Cyclic nucleotide binding causes hexamerization. Cyclic nucleotide binding causes a series of shifts that enclose the cAAA molecule, enable hexamer formation and juxtapose pairs of active sites to allow dsDNA cleavage. In terms of biological role, effector DNase of a CBASS antivirus system. CBASS (cyclic oligonucleotide-based antiphage signaling system) provides immunity against bacteriophage. The CD-NTase protein synthesizes cyclic nucleotides in response to infection; these serve as specific second messenger signals. The signals activate a diverse range of effectors, leading to bacterial cell death and thus abortive phage infection. A type III-C(AAA) CBASS system. A cyclic nucleotide-activated dsDNase. In the presence of 3',3',3'-cyclic AMP-AMP-AMP (cAAA), and to a lesser extent 3',3',3'-cyclic AMP-AMP-GMP (cAAG) and cyclic-di-AMP (c-di-AMP), endonucleolytically degrades dsDNA. Binds one cAAA in a pocket on one surface of the trimer; cAAA binding promotes hexamerization, which is necessary for nuclease activation. Also binds c-diAMP or linear di-AMP with lower affinity. The nuclease digests dsDNA to about 50 bp lengths with a 2-base 3' overhang and a consensus recognition site of 5'-Axx|T-3'. DNA has been modeled to contact a pair of juxtaposed active sites (one from each layer of the hexamer), accounting for cleavage on both strands and the 2-base overhang. Functionally, protects E.coli strain JP313 against bacteriophage lambda cI- infection. When the cdnC-cap7-cap6-nucC operon is transformed into a susceptible strain it confers bacteriophage immunity. Mutations in the sensor (Cap7 also called HORMA) or effector proteins (CdnC, NucC) but not the disassembly protein (Cap6 also called Trip13) no longer confer immunity. The presence of the intact operon leads to culture collapse and cell death which occurs before the phage has finished its replication cycle, thus protecting non-infected bacteria by aborting the phage infection and preventing its propagation. This is Endodeoxyribonuclease NucC from Escherichia coli (strain MS 115-1).